The primary structure comprises 301 residues: Probable actin-related protein 2/3 complex subunit 2 (301 aa).

This sequence belongs to the ARPC2 family. Component of the Arp2/3 complex, at least composed of arx-1, arx-2, arx-4 and arx-6.

The protein resides in the cytoplasm. It is found in the cytoskeleton. In terms of biological role, functions as actin-binding component of the Arp2/3 complex which is involved in regulation of actin polymerization and together with an activating nucleation-promoting factor (NPF) mediates the formation of branched actin networks. Seems to contact the mother actin filament. Plays a role in time-dependent memory loss and the retention of conditioned behavior over time. The chain is Probable actin-related protein 2/3 complex subunit 2 from Caenorhabditis elegans.